A 397-amino-acid chain; its full sequence is MKTIAVLGSTGSIGTNTLDVVRRNRHLYEVYSLVAGQNIELLTGQILEFRPKLAVVASAAVLDLLTASLQAAGLPKSEWPDLLSGDAARVAAVRAPEVDTVISAIVGVAGLEATYEAVCLGKRVGLANKEVLVSGGSLVMEAVRKFGAELLPVDSEHNGAHQCLRAGNRAQVSRLILTASGGPFRNTPVSELPFVTPGQALNHPTWKMGNRITIDCATLMNKGFEVIEACWLFDFAPRDVGVVIHPQSTVHAMIEYSDGSVLAQISATDMRMPIQYALTYPDRADAPVPKIDWAEARKWEFLPPDLEKFPLLKLAYQCQESGGSATCILNAADEIAVEAFLQGRIGFLSIHEIVQETLSRMPSRTPASVGDILEIDRESRTLARELANCRAAGTVTA.

NADPH is bound by residues Thr-10, Gly-11, Ser-12, Ile-13, Gly-36, Asn-38, and Asn-128. Lys-129 is a binding site for 1-deoxy-D-xylulose 5-phosphate. Residue Glu-130 participates in NADPH binding. Asp-154 is a binding site for Mn(2+). 1-deoxy-D-xylulose 5-phosphate is bound by residues Ser-155, Glu-156, Ser-180, and His-203. Residue Glu-156 coordinates Mn(2+). Gly-209 is an NADPH binding site. Residues Asn-221, Lys-222, and Glu-225 each contribute to the 1-deoxy-D-xylulose 5-phosphate site. Glu-225 is a binding site for Mn(2+).

It belongs to the DXR family. Mg(2+) serves as cofactor. Requires Mn(2+) as cofactor.

The enzyme catalyses 2-C-methyl-D-erythritol 4-phosphate + NADP(+) = 1-deoxy-D-xylulose 5-phosphate + NADPH + H(+). It functions in the pathway isoprenoid biosynthesis; isopentenyl diphosphate biosynthesis via DXP pathway; isopentenyl diphosphate from 1-deoxy-D-xylulose 5-phosphate: step 1/6. Functionally, catalyzes the NADPH-dependent rearrangement and reduction of 1-deoxy-D-xylulose-5-phosphate (DXP) to 2-C-methyl-D-erythritol 4-phosphate (MEP). The protein is 1-deoxy-D-xylulose 5-phosphate reductoisomerase of Solibacter usitatus (strain Ellin6076).